A 102-amino-acid polypeptide reads, in one-letter code: Large ribosomal subunit protein bL21 (102 aa).

The protein belongs to the bacterial ribosomal protein bL21 family. As to quaternary structure, part of the 50S ribosomal subunit. Contacts protein L20.

Its function is as follows. This protein binds to 23S rRNA in the presence of protein L20. In Bifidobacterium animalis subsp. lactis (strain AD011), this protein is Large ribosomal subunit protein bL21.